A 173-amino-acid polypeptide reads, in one-letter code: Lipoprotein signal peptidase (173 aa).

Transmembrane regions (helical) follow at residues 14–34 (LAWLWLTVLIVAVDQVSKYYF), 44–64 (IIVIPDYFSWTLAYNTGAAFS), 72–92 (WQRWLFALIAVVVSAVLVVWL), and 98–118 (DDTWLAIALALVLGGALGNLY). Catalysis depends on residues Asp128 and Asp147. The helical transmembrane segment at 139-159 (YFPAFNVADSAITVGAIMLAL) threads the bilayer.

Belongs to the peptidase A8 family.

The protein localises to the cell inner membrane. The enzyme catalyses Release of signal peptides from bacterial membrane prolipoproteins. Hydrolyzes -Xaa-Yaa-Zaa-|-(S,diacylglyceryl)Cys-, in which Xaa is hydrophobic (preferably Leu), and Yaa (Ala or Ser) and Zaa (Gly or Ala) have small, neutral side chains.. Its pathway is protein modification; lipoprotein biosynthesis (signal peptide cleavage). Functionally, this protein specifically catalyzes the removal of signal peptides from prolipoproteins. The sequence is that of Lipoprotein signal peptidase from Pseudomonas syringae pv. tomato (strain ATCC BAA-871 / DC3000).